Consider the following 215-residue polypeptide: Pyridoxine/pyridoxamine 5'-phosphate oxidase (215 aa).

Substrate-binding positions include 11-14 and Lys69; that span reads RRDY. Residues 64-69, 79-80, Lys86, and Gln108 contribute to the FMN site; these read RVVLLK and YT. Residues Tyr126, Arg130, and Ser134 each contribute to the substrate site. Residues 143–144 and Trp188 each bind FMN; that span reads QS. Position 194–196 (194–196) interacts with substrate; that stretch reads RLH. Arg198 serves as a coordination point for FMN.

The protein belongs to the pyridoxamine 5'-phosphate oxidase family. In terms of assembly, homodimer. Requires FMN as cofactor.

It catalyses the reaction pyridoxamine 5'-phosphate + O2 + H2O = pyridoxal 5'-phosphate + H2O2 + NH4(+). The enzyme catalyses pyridoxine 5'-phosphate + O2 = pyridoxal 5'-phosphate + H2O2. It functions in the pathway cofactor metabolism; pyridoxal 5'-phosphate salvage; pyridoxal 5'-phosphate from pyridoxamine 5'-phosphate: step 1/1. It participates in cofactor metabolism; pyridoxal 5'-phosphate salvage; pyridoxal 5'-phosphate from pyridoxine 5'-phosphate: step 1/1. Its function is as follows. Catalyzes the oxidation of either pyridoxine 5'-phosphate (PNP) or pyridoxamine 5'-phosphate (PMP) into pyridoxal 5'-phosphate (PLP). This is Pyridoxine/pyridoxamine 5'-phosphate oxidase from Legionella pneumophila (strain Paris).